Here is a 76-residue protein sequence, read N- to C-terminus: Omega/Kappa-hexatoxin-Hv1h (76 aa).

Positions 1–22 are cleaved as a signal peptide; sequence MNTATGFIVLLVLATILGGIEA. A propeptide spanning residues 23 to 35 is cleaved from the precursor; that stretch reads GESHMRKDAMGRV. 3 disulfides stabilise this stretch: Cys-40–Cys-55, Cys-47–Cys-60, and Cys-54–Cys-74.

It belongs to the neurotoxin 08 (Shiva) family. 02 (omega/kappa toxin) subfamily. Expressed by the venom gland.

It is found in the secreted. Functionally, toxin that may inhibit ion channels. In Hadronyche versuta (Blue mountains funnel-web spider), this protein is Omega/Kappa-hexatoxin-Hv1h.